A 142-amino-acid polypeptide reads, in one-letter code: Large ribosomal subunit protein uL13 (142 aa).

The protein belongs to the universal ribosomal protein uL13 family. In terms of assembly, part of the 50S ribosomal subunit.

Functionally, this protein is one of the early assembly proteins of the 50S ribosomal subunit, although it is not seen to bind rRNA by itself. It is important during the early stages of 50S assembly. The chain is Large ribosomal subunit protein uL13 from Ectopseudomonas mendocina (strain ymp) (Pseudomonas mendocina).